We begin with the raw amino-acid sequence, 521 residues long: Ribonuclease Y (521 aa).

The chain crosses the membrane as a helical span at residues 3 to 23 (VSIWMLVITVLAAVAAYFAGS). Residues 211–271 (TVSVVPLPSD…VRREVARMSL (61 aa)) enclose the KH domain. The HD domain maps to 337–430 (IYQHSLEVAF…VQAADALSGA (94 aa)).

It belongs to the RNase Y family.

The protein localises to the cell membrane. Its function is as follows. Endoribonuclease that initiates mRNA decay. In Pelobacter propionicus (strain DSM 2379 / NBRC 103807 / OttBd1), this protein is Ribonuclease Y.